Here is a 98-residue protein sequence, read N- to C-terminus: Putative protein adenylyltransferase MJ0128 (98 aa).

The GSX(10)DXD motif signature appears at 31–45; that stretch reads GSYARNEQTEKSDID. Residues aspartate 43, aspartate 45, and aspartate 75 each contribute to the Mg(2+) site.

It belongs to the MntA antitoxin family. In terms of assembly, probably forms a complex with cognate toxin MJ0127. Mg(2+) is required as a cofactor.

The catalysed reaction is L-tyrosyl-[protein] + ATP = O-(5'-adenylyl)-L-tyrosyl-[protein] + diphosphate. It carries out the reaction O-(5'-adenylyl)-L-tyrosyl-[protein] + ATP = O-[5'-(adenylyl-(5'-&gt;3')-adenylyl)]-L-tyrosyl-[protein] + diphosphate. In terms of biological role, probable antitoxin component of a putative type VII toxin-antitoxin (TA) system. Neutralizes cognate toxic MJ0127 by di-AMPylation. The polypeptide is Putative protein adenylyltransferase MJ0128 (Methanocaldococcus jannaschii (strain ATCC 43067 / DSM 2661 / JAL-1 / JCM 10045 / NBRC 100440) (Methanococcus jannaschii)).